Here is a 395-residue protein sequence, read N- to C-terminus: Zinc-regulated GTPase metalloprotein activator 1F (395 aa).

The segment at 1-22 (MLPAVGSVDEEEDPAEEDCPEL) is disordered. The segment covering 8-20 (VDEEEDPAEEDCP) has biased composition (acidic residues). The short motif at 17 to 24 (EDCPELVP) is the psi-PxLVp motif element. 49 to 56 (GYLGAGKT) contributes to the GTP binding site. 3 residues coordinate Zn(2+): Cys107, Cys109, and Cys110. The CXCC motif motif lies at 107-110 (CLCC). GTP-binding positions include 110 to 114 (CSVKD) and 203 to 206 (NKTD). The CobW C-terminal domain maps to 274 to 377 (IVTITFDVPG…ILKQLFIATV (104 aa)).

The protein belongs to the SIMIBI class G3E GTPase family. ZNG1 subfamily.

It is found in the nucleus. It catalyses the reaction GTP + H2O = GDP + phosphate + H(+). Zinc chaperone that directly transfers zinc cofactor to target metalloproteins, thereby activating them. Catalyzes zinc insertion into the active site of methionine aminopeptidase METAP1, which function to cleave the initiator methionine from polypeptides during or after protein translation. Mechanistically, the N-terminal psi-PxLVp motif binds to the C6H2-type zinc finger of inactive form of METAP1. After formation of the docked complex, zinc is transferred from the CXCC motif in the GTPase domain of ZNG1F to the zinc binding site in the peptidase domain of METAP1 in a process requiring GTP hydrolysis. GTP/GDP exchange is required for release of active METAP1. In Homo sapiens (Human), this protein is Zinc-regulated GTPase metalloprotein activator 1F.